We begin with the raw amino-acid sequence, 237 residues long: Peptidase E (237 aa).

Residues serine 122, aspartate 137, and histidine 159 each act as charge relay system in the active site.

This sequence belongs to the peptidase S51 family.

Its subcellular location is the cytoplasm. It carries out the reaction Dipeptidase E catalyzes the hydrolysis of dipeptides Asp-|-Xaa. It does not act on peptides with N-terminal Glu, Asn or Gln, nor does it cleave isoaspartyl peptides.. In terms of biological role, hydrolyzes dipeptides containing N-terminal aspartate residues. May play a role in allowing the cell to use peptide aspartate to spare carbon otherwise required for the synthesis of the aspartate family of amino acids. The sequence is that of Peptidase E from Shewanella baltica (strain OS155 / ATCC BAA-1091).